A 363-amino-acid polypeptide reads, in one-letter code: Protein-arginine kinase (363 aa).

The 232-residue stretch at 24-255 (IVLSSRIRLA…QQLIAQERAA (232 aa)) folds into the Phosphagen kinase C-terminal domain. ATP contacts are provided by residues 27 to 31 (SSRIR), His92, Arg126, 177 to 181 (RASVM), and 208 to 213 (RGTYGE). The RDXXRA motif of the pArg binding pocket involved in allosteric regulation motif lies at 338–343 (RDVRRA).

It belongs to the ATP:guanido phosphotransferase family.

The catalysed reaction is L-arginyl-[protein] + ATP = N(omega)-phospho-L-arginyl-[protein] + ADP + H(+). Its activity is regulated as follows. Appears to be allosterically activated by the binding of pArg-containing polypeptides to the pArg-binding pocket localized in the C-terminal domain of McsB. Catalyzes the specific phosphorylation of arginine residues in a large number of proteins. Is part of the bacterial stress response system. Protein arginine phosphorylation has a physiologically important role and is involved in the regulation of many critical cellular processes, such as protein homeostasis, motility, competence, and stringent and stress responses, by regulating gene expression and protein activity. This is Protein-arginine kinase from Geobacillus thermodenitrificans (strain NG80-2).